A 487-amino-acid chain; its full sequence is Recombining binding protein suppressor of hairless (487 aa).

DNA-binding regions lie at residues 44–54 (QKSYGNEKRFF) and 152–157 (SKPSKK). At Lys-162 the chain carries N6-acetyllysine. The interval 179 to 184 (RLRSQT) is DNA-binding. In terms of domain architecture, IPT/TIG spans 342–432 (PVVESLQLNG…YSTSLTFTYT (91 aa)). The segment covering 452-468 (SSQVPPNESNTNSEGSY) has biased composition (polar residues). Residues 452–487 (SSQVPPNESNTNSEGSYTNVSTNSTSVTSSTATVVS) form a disordered region. Positions 469–487 (TNVSTNSTSVTSSTATVVS) are enriched in low complexity.

It belongs to the Su(H) family. Interacts with activated NOTCH1, NOTCH2 or NOTCH3. Interacts with MINT/SHARP. This interaction may mediate the recruitment of large corepressor complexes containing proteins such as HDAC1, HDAC2, NCOR2, SAP30, FHL1/KYOT2 and CIR1. Interacts with EP300, MAML1 and PTF1A. Interacts with RITA1, leading to nuclear export, prevent the interaction between RBPJ and NICD product and subsequent down-regulation of the Notch signaling pathway. Interacts with SNW1. Interacts with CHCHD2 and CXXC5. Interacts with BEND6 (via BEN domain). Interacts with NKAPL. Interacts with ZMIZ1. Interacts with RBM15. Interacts with L3MBTL3 and KDM1A; the interaction with KDM1A is weaker in the absence of L3MBTL3 and the interaction with L3MBTL3 is impaired by Notch-derived peptides containing the intracellular domain (NICD).

It is found in the nucleus. The protein localises to the cytoplasm. In terms of biological role, transcriptional regulator that plays a central role in Notch signaling, a signaling pathway involved in cell-cell communication that regulates a broad spectrum of cell-fate determinations. Acts as a transcriptional repressor when it is not associated with Notch proteins. When associated with some NICD product of Notch proteins (Notch intracellular domain), it acts as a transcriptional activator that activates transcription of Notch target genes. Probably represses or activates transcription via the recruitment of chromatin remodeling complexes containing histone deacetylase or histone acetylase proteins, respectively. Specifically binds to the immunoglobulin kappa-type J segment recombination signal sequence. Binds specifically to methylated DNA. Binds to the oxygen responsive element of COX4I2 and activates its transcription under hypoxia conditions (4% oxygen). Negatively regulates the phagocyte oxidative burst in response to bacterial infection by repressing transcription of NADPH oxidase subunits. In Bos taurus (Bovine), this protein is Recombining binding protein suppressor of hairless (RBPJ).